The primary structure comprises 337 residues: Protoheme IX farnesyltransferase (337 aa).

The segment covering methionine 1–valine 17 has biased composition (polar residues). Positions methionine 1 to arginine 41 are disordered. Residues aspartate 27–arginine 41 are compositionally biased toward basic and acidic residues. 8 helical membrane-spanning segments follow: residues isoleucine 59 to proline 79, leucine 81 to phenylalanine 101, serine 130 to alanine 150, leucine 153 to leucine 173, tryptophan 196 to tryptophan 216, valine 250 to proline 270, valine 271 to valine 291, and proline 311 to valine 331.

This sequence belongs to the UbiA prenyltransferase family. Protoheme IX farnesyltransferase subfamily.

The protein resides in the cell membrane. It catalyses the reaction heme b + (2E,6E)-farnesyl diphosphate + H2O = Fe(II)-heme o + diphosphate. It functions in the pathway porphyrin-containing compound metabolism; heme O biosynthesis; heme O from protoheme: step 1/1. Its function is as follows. Converts heme B (protoheme IX) to heme O by substitution of the vinyl group on carbon 2 of heme B porphyrin ring with a hydroxyethyl farnesyl side group. The sequence is that of Protoheme IX farnesyltransferase from Cutibacterium acnes (strain DSM 16379 / KPA171202) (Propionibacterium acnes).